Here is a 118-residue protein sequence, read N- to C-terminus: Holo-[acyl-carrier-protein] synthase (118 aa).

The Mg(2+) site is built by D8 and E50.

The protein belongs to the P-Pant transferase superfamily. AcpS family. It depends on Mg(2+) as a cofactor.

It localises to the cytoplasm. The enzyme catalyses apo-[ACP] + CoA = holo-[ACP] + adenosine 3',5'-bisphosphate + H(+). In terms of biological role, transfers the 4'-phosphopantetheine moiety from coenzyme A to a Ser of acyl-carrier-protein. The polypeptide is Holo-[acyl-carrier-protein] synthase (Leifsonia xyli subsp. xyli (strain CTCB07)).